Here is a 331-residue protein sequence, read N- to C-terminus: ESX-3 secretion system protein EccE3 (331 aa).

2 consecutive transmembrane segments (helical) span residues 11-31 (GRVT…PWQS) and 37-57 (LLGV…GLYF).

The protein belongs to the EccE family. As to quaternary structure, part of the ESX-3 / type VII secretion system (T7SS), which is composed of cytosolic and membrane components. The ESX-3 membrane complex is composed of EccB3, EccC3, EccD3 and EccE3.

The protein resides in the cell inner membrane. Part of the ESX-3 specialized secretion system, which is important for iron and zinc uptake or homeostasis. The polypeptide is ESX-3 secretion system protein EccE3 (Mycobacterium tuberculosis (strain ATCC 25618 / H37Rv)).